Reading from the N-terminus, the 32-residue chain is Phospholipase A2 (32 aa).

Residues Y16, G18, and G20 each contribute to the Ca(2+) site.

Requires Ca(2+) as cofactor. Expressed by the venom gland.

It is found in the secreted. It carries out the reaction a 1,2-diacyl-sn-glycero-3-phosphocholine + H2O = a 1-acyl-sn-glycero-3-phosphocholine + a fatty acid + H(+). PLA2 catalyzes the calcium-dependent hydrolysis of the 2-acyl groups in 3-sn-phosphoglycerides. This Micrurus lemniscatus (South American coral snake) protein is Phospholipase A2.